A 148-amino-acid chain; its full sequence is uncharacterized protein (148 aa).

Low complexity predominate over residues 36-45; the sequence is PGAPSAGPMS. A disordered region spans residues 36–148; it reads PGAPSAGPMS…SGTAFFPGTT (113 aa). Polar residues predominate over residues 46 to 55; sequence DSNSKGSTPR.

This is an uncharacterized protein from Bovine leukemia virus (isolate Japanese BLV-1) (BLV).